The sequence spans 146 residues: Acidic phospholipase A2 C (146 aa).

The N-terminal stretch at 1–21 is a signal peptide; that stretch reads MNPAHLLILAAVCVSPLGASS. Residues 22-27 constitute a propeptide that is removed on maturation; it reads NRPMPL. Cystine bridges form between Cys38–Cys98, Cys53–Cys145, Cys55–Cys71, Cys70–Cys126, Cys77–Cys119, Cys87–Cys112, and Cys105–Cys117. Ca(2+) contacts are provided by Tyr54, Gly56, and Gly58. His74 is an active-site residue. A Ca(2+)-binding site is contributed by Asp75. Asp120 is a catalytic residue.

The protein belongs to the phospholipase A2 family. Group I subfamily. D49 sub-subfamily. Ca(2+) is required as a cofactor. In terms of tissue distribution, expressed by the venom gland.

The protein localises to the secreted. It carries out the reaction a 1,2-diacyl-sn-glycero-3-phosphocholine + H2O = a 1-acyl-sn-glycero-3-phosphocholine + a fatty acid + H(+). Its function is as follows. PLA2 catalyzes the calcium-dependent hydrolysis of the 2-acyl groups in 3-sn-phosphoglycerides. This chain is Acidic phospholipase A2 C, found in Naja sputatrix (Malayan spitting cobra).